A 75-amino-acid chain; its full sequence is Large ribosomal subunit protein bL31 (75 aa).

Belongs to the bacterial ribosomal protein bL31 family. Type A subfamily. Part of the 50S ribosomal subunit.

Its function is as follows. Binds the 23S rRNA. This chain is Large ribosomal subunit protein bL31, found in Chlorobium phaeobacteroides (strain BS1).